A 347-amino-acid chain; its full sequence is Protein RecA (347 aa).

67 to 74 (GPESSGKT) is an ATP binding site.

The protein belongs to the RecA family.

The protein localises to the cytoplasm. Functionally, can catalyze the hydrolysis of ATP in the presence of single-stranded DNA, the ATP-dependent uptake of single-stranded DNA by duplex DNA, and the ATP-dependent hybridization of homologous single-stranded DNAs. It interacts with LexA causing its activation and leading to its autocatalytic cleavage. The sequence is that of Protein RecA from Helicobacter acinonychis (strain Sheeba).